The sequence spans 121 residues: uncharacterized protein (121 aa).

Disordered stretches follow at residues 1–28 and 60–81; these read MGCASAKHVATVQNEEEAQRGKSYQNGD and QENLEKSASSNTRLKTNKEIPG. 2 positions are modified to phosphoserine: S95 and S115.

This is an uncharacterized protein from Mus musculus (Mouse).